A 182-amino-acid chain; its full sequence is Urease accessory protein UreE (182 aa).

Residues 128 to 182 (PRTEPFRPEGGAYGHGRTLGHDHGPAQGHGHDHPHVHVHISHKPDEDETPDADPA) form a disordered region. Residues 146-162 (LGHDHGPAQGHGHDHPH) show a composition bias toward basic and acidic residues. Positions 173–182 (EDETPDADPA) are enriched in acidic residues.

This sequence belongs to the UreE family.

It is found in the cytoplasm. Involved in urease metallocenter assembly. Binds nickel. Probably functions as a nickel donor during metallocenter assembly. This chain is Urease accessory protein UreE, found in Cereibacter sphaeroides (strain ATCC 17023 / DSM 158 / JCM 6121 / CCUG 31486 / LMG 2827 / NBRC 12203 / NCIMB 8253 / ATH 2.4.1.) (Rhodobacter sphaeroides).